Here is a 187-residue protein sequence, read N- to C-terminus: Large ribosomal subunit protein uL22 (187 aa).

The protein belongs to the universal ribosomal protein uL22 family.

The polypeptide is Large ribosomal subunit protein uL22 (RPL17) (Theileria parva (East coast fever infection agent)).